The sequence spans 129 residues: Prefoldin subunit 6 (129 aa).

2 coiled-coil regions span residues 6–26 (VRDL…IQKD) and 84–118 (IEYI…LQQR).

Belongs to the prefoldin subunit beta family. In terms of assembly, heterohexamer of two PFD-alpha type and four PFD-beta type subunits forming prefoldin co-chaperone complex. Interacts with PFD2, PFD3, PFD4 and PFD5. Interacts with LSM8, a specific subunit of the LSM2-8 complex, which is a core component of the spliceosome. Binds to HSP90 to facilitate the formation of a larger complex made at least of HSP90, PFD6 and LSM8.

It is found in the cytoplasm. The protein localises to the nucleus. Binds specifically to cytosolic chaperonin (c-CPN) and transfers target proteins to it. Binds to nascent polypeptide chain and promotes folding in an environment in which there are many competing pathways for nonnative proteins. Together with other chaperonins, contribute to the regulation of gene expression by modulating the spliceosome function on pre-mRNA splicing post-transcriptionally by acting as a co-chaperone of Hsp90 to control levels of LSM8. Required for the biogenesis of tubulins and for subsequent microtubules (MTs) organization and dynamicity, but unable to associate with microtubules. Involved in the process leading to microtubules dissociation in response to gibberellic acid (GA) probably due to the DELLA proteins-mediated translocation of the prefoldin co-chaperone complex from the cytoplasm to the nucleus. Contributes to the GA-dependent regulation of PIN2 trafficking at the plasma membrane, thus influencing auxin flux. The sequence is that of Prefoldin subunit 6 from Arabidopsis thaliana (Mouse-ear cress).